The following is a 158-amino-acid chain: Small ribosomal subunit protein uS7c (158 aa).

This sequence belongs to the universal ribosomal protein uS7 family. In terms of assembly, part of the 30S ribosomal subunit.

It localises to the plastid. Its subcellular location is the chloroplast. One of the primary rRNA binding proteins, it binds directly to 16S rRNA where it nucleates assembly of the head domain of the 30S subunit. This is Small ribosomal subunit protein uS7c (rps7) from Trieres chinensis (Marine centric diatom).